Here is a 257-residue protein sequence, read N- to C-terminus: Melatonin receptor type 1A (257 aa).

Residues leucine 5–leucine 22 lie on the Extracellular side of the membrane. Cysteine 20 and cysteine 97 are disulfide-bonded. A helical transmembrane segment spans residues serine 23–isoleucine 43. Topologically, residues asparagine 44–serine 64 are cytoplasmic. Residues leucine 65–valine 85 traverse the membrane as a helical segment. Over glycine 86 to tyrosine 107 the chain is Extracellular. Residues threonine 108–leucine 128 traverse the membrane as a helical segment. The Cytoplasmic segment spans residues arginine 129–methionine 160. The helical transmembrane segment at phenylalanine 161–valine 181 threads the bilayer. The Extracellular segment spans residues alanine 182–glutamate 194. The chain crosses the membrane as a helical span at residues tryptophan 195 to tyrosine 215. Residues glycine 216–proline 257 lie on the Cytoplasmic side of the membrane.

Belongs to the G-protein coupled receptor 1 family.

The protein resides in the cell membrane. Its function is as follows. High affinity receptor for melatonin. Likely to mediate the reproductive and circadian actions of melatonin. The activity of this receptor is mediated by pertussis toxin sensitive G proteins that inhibit adenylate cyclase activity. Possibly involved in sleep induction, by melatonin activation of the potassium channel KCNMA1/BK and the dissociation of G-beta and G-gamma subunits, thereby decreasing synaptic transmission. The sequence is that of Melatonin receptor type 1A (MTNR1A) from Bos taurus (Bovine).